We begin with the raw amino-acid sequence, 200 residues long: Adenylate kinase (200 aa).

ATP is bound at residue 10-15 (GAGKGT). Residues 30-59 (STGDMLRAAVAAGTPVGLEAKSIMESGGLV) are NMP. AMP contacts are provided by residues Thr31, Arg36, 57-59 (GLV), 85-88 (GFPR), and Gln92. An LID region spans residues 126–142 (KRAEETAARGQPVRKDD). Arg127 contributes to the ATP binding site. Residues Arg139 and Arg150 each coordinate AMP. Residue Lys178 participates in ATP binding.

Belongs to the adenylate kinase family. Monomer.

It is found in the cytoplasm. The catalysed reaction is AMP + ATP = 2 ADP. The protein operates within purine metabolism; AMP biosynthesis via salvage pathway; AMP from ADP: step 1/1. In terms of biological role, catalyzes the reversible transfer of the terminal phosphate group between ATP and AMP. Plays an important role in cellular energy homeostasis and in adenine nucleotide metabolism. In Methylorubrum populi (strain ATCC BAA-705 / NCIMB 13946 / BJ001) (Methylobacterium populi), this protein is Adenylate kinase.